The sequence spans 313 residues: MKGQTGLRSLALLYISPLYILERLPLKLSAPDTLVVRGSFIVPTEPLYPSITMVQTNLEVVDDTLHLPRILCLHGGGSNAAIFQAQCRRLIAQLRSEFRFVFAQAPFLSDAEPNVMSVYSQWGPFRRWLRWCPDHPEIRPEDAIRAIDDCLEDVKRQDDAKGATGAWVGLLGFSQGAKMCASLLYRQQIRQELRGRSFAGSDYRFGVLLAGRAPLVSLDPDLDLNSSLPDVSQITDAKYHGPSQDVLRIPTVHVHGMRDPHVDLHRQLFEEFCAPESRRLVEWDGDHRVPLKYNDVSLVAYQIRELATQTGAP.

Catalysis depends on charge relay system residues Ser174, Asp259, and His287.

This sequence belongs to the LovG family.

Its pathway is mycotoxin biosynthesis. Functionally, esterase; part of the gene cluster that mediates the biosynthesis of the mycotoxin citrinin, a hepato-nephrotoxic compound to humans due to inhibition of respiration complex III. The pathway begins with the synthesis of a keto-aldehyde intermediate by the citrinin PKS (pksCT) from successive condensations of 4 malonyl-CoA units, presumably with a simple acetyl-CoA starter unit. Release of the keto-aldehyde intermediate is consistent with the presence of the C-terminal reductive release domain. Mp11 collaborates with pksCT by catalyzing the hydrolysis of ACP-bound acyl intermediates to free the ACP from stalled intermediates. Mpl2 then catalyzes the oxidation of the C-12 methyl of the ketone intermediate to an alcohol intermediate which is further oxidized by the oxidoreductase mpl7 to produce a bisaldehyde intermediate. The fourth catalytic step is catalyzed by the mpl4 aldehyde dehydrogenase. The final transformation is the reduction of C-3 by mpl6 to provide the chemically stable citrinin nucleus. In Monascus purpureus (Red mold), this protein is Esterase mpl1.